A 72-amino-acid chain; its full sequence is Translation initiation factor IF-1 (72 aa).

Residues 1-72 form the S1-like domain; the sequence is MAKDDVIEID…DKGRITFRYK (72 aa).

It belongs to the IF-1 family. As to quaternary structure, component of the 30S ribosomal translation pre-initiation complex which assembles on the 30S ribosome in the order IF-2 and IF-3, IF-1 and N-formylmethionyl-tRNA(fMet); mRNA recruitment can occur at any time during PIC assembly.

Its subcellular location is the cytoplasm. Functionally, one of the essential components for the initiation of protein synthesis. Stabilizes the binding of IF-2 and IF-3 on the 30S subunit to which N-formylmethionyl-tRNA(fMet) subsequently binds. Helps modulate mRNA selection, yielding the 30S pre-initiation complex (PIC). Upon addition of the 50S ribosomal subunit IF-1, IF-2 and IF-3 are released leaving the mature 70S translation initiation complex. This chain is Translation initiation factor IF-1, found in Sulfurovum sp. (strain NBC37-1).